A 1402-amino-acid polypeptide reads, in one-letter code: Nuclear pore complex protein Nup160 (1402 aa).

Residues S10, S456, S915, and S1123 each carry the phosphoserine modification.

As to quaternary structure, part of the nuclear pore complex (NPC). Forms part of the NUP160 subcomplex in the nuclear pore which is composed of NUP160, NUP133, NUP107 and NUP96. This complex plays a role in RNA export and in tethering NUP98 and NUP153 to the nucleus.

The protein localises to the nucleus. The protein resides in the nuclear pore complex. Functions as a component of the nuclear pore complex (NPC). Involved in poly(A)+ RNA transport. This chain is Nuclear pore complex protein Nup160 (Nup160), found in Mus musculus (Mouse).